The primary structure comprises 515 residues: NADH-quinone oxidoreductase subunit N (515 aa).

14 consecutive transmembrane segments (helical) span residues 14–34, 40–60, 80–100, 138–158, 160–180, 195–215, 239–259, 271–291, 307–327, 333–353, 361–381, 404–424, 438–458, and 485–505; these read ITPI…EAFL, WSAQ…ALAL, APTL…ILLI, TEVF…CAAN, LLTM…MCGL, YFLL…LLYG, LFAG…VGPF, PTAV…GGIL, GVLY…GLTQ, MIAY…IALT, MFYL…ISLV, VAWV…TSGF, GMAP…FFYL, and AAIT…SLAL.

It belongs to the complex I subunit 2 family. In terms of assembly, NDH-1 is composed of 14 different subunits. Subunits NuoA, H, J, K, L, M, N constitute the membrane sector of the complex.

It localises to the cell membrane. It catalyses the reaction a quinone + NADH + 5 H(+)(in) = a quinol + NAD(+) + 4 H(+)(out). In terms of biological role, NDH-1 shuttles electrons from NADH, via FMN and iron-sulfur (Fe-S) centers, to quinones in the respiratory chain. The immediate electron acceptor for the enzyme in this species is believed to be a menaquinone. Couples the redox reaction to proton translocation (for every two electrons transferred, four hydrogen ions are translocated across the cytoplasmic membrane), and thus conserves the redox energy in a proton gradient. This chain is NADH-quinone oxidoreductase subunit N, found in Saccharopolyspora erythraea (strain ATCC 11635 / DSM 40517 / JCM 4748 / NBRC 13426 / NCIMB 8594 / NRRL 2338).